A 337-amino-acid chain; its full sequence is Glyceraldehyde-3-phosphate dehydrogenase (337 aa).

NAD(+) contacts are provided by residues 12 to 13, Asp34, and Arg79; that span reads RI. D-glyceraldehyde 3-phosphate-binding positions include 150 to 152, Thr181, 210 to 211, and Arg233; these read SCT and TG. Cys151 functions as the Nucleophile in the catalytic mechanism. Asn315 contacts NAD(+).

The protein belongs to the glyceraldehyde-3-phosphate dehydrogenase family. As to quaternary structure, homotetramer.

The protein localises to the cytoplasm. The catalysed reaction is D-glyceraldehyde 3-phosphate + phosphate + NAD(+) = (2R)-3-phospho-glyceroyl phosphate + NADH + H(+). The protein operates within carbohydrate degradation; glycolysis; pyruvate from D-glyceraldehyde 3-phosphate: step 1/5. This Cryphonectria parasitica (Chestnut blight fungus) protein is Glyceraldehyde-3-phosphate dehydrogenase.